The primary structure comprises 73 residues: Translation initiation factor IF-1 (73 aa).

The 72-residue stretch at 1-72 (MAKDDVIEVE…TKGRITYRFI (72 aa)) folds into the S1-like domain.

Belongs to the IF-1 family. In terms of assembly, component of the 30S ribosomal translation pre-initiation complex which assembles on the 30S ribosome in the order IF-2 and IF-3, IF-1 and N-formylmethionyl-tRNA(fMet); mRNA recruitment can occur at any time during PIC assembly.

It is found in the cytoplasm. One of the essential components for the initiation of protein synthesis. Stabilizes the binding of IF-2 and IF-3 on the 30S subunit to which N-formylmethionyl-tRNA(fMet) subsequently binds. Helps modulate mRNA selection, yielding the 30S pre-initiation complex (PIC). Upon addition of the 50S ribosomal subunit IF-1, IF-2 and IF-3 are released leaving the mature 70S translation initiation complex. The chain is Translation initiation factor IF-1 from Lactobacillus acidophilus (strain ATCC 700396 / NCK56 / N2 / NCFM).